A 685-amino-acid polypeptide reads, in one-letter code: Sodium-dependent phosphate transporter 1-A (685 aa).

Helical transmembrane passes span 21–41 (IMAP…VLAF), 66–86 (ACIL…AKVS), 106–126 (LMAG…AASF), 162–182 (IVLS…LLFL), 207–227 (ACTI…LLGF), and 234–254 (GIIL…WFVV). Disordered stretches follow at residues 438 to 458 (RNRD…HGAD) and 483 to 513 (EAEE…HDQD). The segment covering 483–496 (EAEEQEEGSVEDVE) has biased composition (acidic residues). Residues 497-513 (TDRKSSSSSLEERHDQD) show a composition bias toward basic and acidic residues. The next 4 helical transmembrane spans lie at 517-537 (VSLL…FAHG), 565-585 (ATPI…LWVW), 606-626 (FSIE…GLPI), and 656-676 (IFLA…GIMA).

It belongs to the inorganic phosphate transporter (PiT) (TC 2.A.20) family.

It is found in the membrane. Functionally, sodium-phosphate symporter which plays a fundamental housekeeping role in phosphate transport. This is Sodium-dependent phosphate transporter 1-A (slc20a1-a) from Xenopus laevis (African clawed frog).